A 252-amino-acid chain; its full sequence is Probable transcriptional regulator SauR (252 aa).

Residues 6-68 (NAAAVRAFRI…AGNRHYECSS (63 aa)) enclose the HTH iclR-type domain. The H-T-H motif DNA-binding region spans 28–47 (LAAIVQAIELPKQTVHRILK). Residues 83 to 252 (PAAARHAILQ…ADEMVKTFCE (170 aa)) form the IclR-ED domain.

In terms of biological role, may regulate transcription of the sauSTU operon. The chain is Probable transcriptional regulator SauR (sauR) from Cupriavidus necator (strain ATCC 17699 / DSM 428 / KCTC 22496 / NCIMB 10442 / H16 / Stanier 337) (Ralstonia eutropha).